The chain runs to 343 residues: Heat-inducible transcription repressor HrcA (343 aa).

The protein belongs to the HrcA family.

Its function is as follows. Negative regulator of class I heat shock genes (grpE-dnaK-dnaJ and groELS operons). Prevents heat-shock induction of these operons. This Mycolicibacterium paratuberculosis (strain ATCC BAA-968 / K-10) (Mycobacterium paratuberculosis) protein is Heat-inducible transcription repressor HrcA.